The primary structure comprises 587 residues: A-type ATP synthase subunit A (587 aa).

Position 234–241 (234–241 (GPFGSGKT)) interacts with ATP.

It belongs to the ATPase alpha/beta chains family. In terms of assembly, the N-terminus (approximately residues 106-122) interacts with subunit H. Has multiple subunits with at least A(3), B(3), C, D, E(1 or 2), F, H(2), I and proteolipid K(x).

It localises to the cell membrane. It catalyses the reaction ATP + H2O + 4 H(+)(in) = ADP + phosphate + 5 H(+)(out). Its activity is regulated as follows. ATP hydrolysis is inhibited by N',N'-dicyclohexylcarbodiimide. Its function is as follows. Component of the A-type ATP synthase that produces ATP from ADP in the presence of a proton gradient across the membrane. The A chain is the catalytic subunit. Hydrolyzes ATP, GTP (86% of ATPase rate) and UTP (54% of ATPase rate), has very poor activity on CTP. This Methanocaldococcus jannaschii (strain ATCC 43067 / DSM 2661 / JAL-1 / JCM 10045 / NBRC 100440) (Methanococcus jannaschii) protein is A-type ATP synthase subunit A.